The primary structure comprises 251 residues: Insulin-induced gene 1 protein (251 aa).

Residues 1–58 (MPRLEEHCWSCSCSTSVKTKDLSSAGWIVCKTGEMMSIITSVLSHAYGSLHSLQSANL) are Cytoplasmic-facing. The chain crosses the membrane as a helical span at residues 59–81 (IRRGLVLFIVGVVLALVLNLLQI). Residues 82–100 (QRNVTLFPEEVLDTLFSSA) lie on the Extracellular side of the membrane. Residues 101–118 (WWIPLCCGTAAAVVGLLY) traverse the membrane as a helical segment. The Cytoplasmic portion of the chain corresponds to 119–133 (PCLDHHLGEPHKFKR). Residues 134–156 (EWASVMRCIAVFVGINHASAKLD) form a helical membrane-spanning segment. At 157–159 (FAN) the chain is on the extracellular side. A helical membrane pass occupies residues 160-178 (NVQLSLTLAALSLGLWWTF). At 179-183 (DRSRS) the chain is on the cytoplasmic side. The helical transmembrane segment at 184–205 (GFGLGLTTALLATLIAQLLVYN) threads the bilayer. The Extracellular portion of the chain corresponds to 206–219 (GIYQYTSPDFLYVR). The helical transmembrane segment at 220-237 (SWLPCIFFSGGVTVGNIG) threads the bilayer. At 238–251 (RQLAMGSTEKIHND) the chain is on the cytoplasmic side. Residues 245-251 (TEKIHND) carry the KxHxx motif.

This sequence belongs to the INSIG family. As to quaternary structure, interacts with scap; interaction is direct and only takes place in the presence of sterols; it prevents interaction between scap and the coat protein complex II (COPII). Associates with the SCAP-SREBP complex; association is mediated via its interaction with scap and only takes place in the presence of sterols.

Its subcellular location is the endoplasmic reticulum membrane. Its function is as follows. Oxysterol-binding protein that mediates feedback control of cholesterol synthesis by controlling both endoplasmic reticulum to Golgi transport of scap and degradation of hmgcr. Acts as a negative regulator of cholesterol biosynthesis by mediating the retention of the SCAP-SREBP complex in the endoplasmic reticulum, thereby blocking the processing of sterol regulatory element-binding proteins (SREBPs). Binds oxysterol, including 25-hydroxycholesterol, regulating interaction with scap and retention of the SCAP-SREBP complex in the endoplasmic reticulum. In presence of oxysterol, interacts with scap, retaining the SCAP-SREBP complex in the endoplasmic reticulum, thereby preventing scap from escorting SREBPs to the Golgi. Sterol deprivation reduces oxysterol-binding, disrupting the interaction between insig1 and scap, thereby promoting Golgi transport of the SCAP-SREBP complex, followed by processing and nuclear translocation of SREBPs. Also regulates cholesterol synthesis by regulating degradation of hmgcr. The sequence is that of Insulin-induced gene 1 protein from Danio rerio (Zebrafish).